Consider the following 819-residue polypeptide: MQSGHYNRRQSRRQRISSNTTDSPRHTHGTRYRSTNWYTHPPQILSNSETLVAVQELLNSEMDQDSSSDASDDFPGYALHHSTYNGSEQNTSTSRHENRIFKLTEREANEEININTDAIDDEGEAEEGEAEEDAIDDEGEAEEGEAEEDAIDDEGEAEEGEAEEDAIDDEGEAEEGEAEEGEAEEGEAEEDAIDDEGEAEEDAAEEDAIDDEGEAEEDYFSVSQVCSRDADEVYFTLDPEISYSTDLRIAKVMEPAVSKELNVSKRCVEPVTLTGSMLAHNGFDESWFAMRECTRREYITVQGLYDPIHLRYQFDTSRMTPPQILRTIPALPNMTLGELLLIFPIEFMAQPISIERILVEDVFLDRRASSKTHKYGPRWNSVYALPYNAGKMYVQHIPGFYDVSLRAVGQGTAIWHHMILSTAACAISNRISHGDGLGFLLDAAIRISANCIFLGRNDNFGVGDPCWLEDHLAGLPREAVPDVLQVTQLVLPNRGPTVAIMRGFFGALAYWPELRIAISEPSTSLVRYATGHMELAEWFLFSRTHSLKPQFTPTEREMLASFFTLYVTLGGGMLNWICRATAMYLAAPYHSRSAYIAVCESLPYYYIPVNSDLLCDLEVLLLGEVDLPTVCESYATIAHELTGYEAVRTAATNFMIEFADCYKESETDLMVSAYLGAVLLLQRVLGHANLLLLLLSGAALYGGCSIYIPRGILDAYNTLMLAASPLYAHQTLTSFWKDRDDAMQTLGIRPTTDVLPKEQDRIVQASPIEMNFRFVGLETIYPREQPIPSVDLAENLMQYRNEILGLDWKSVAMHLLRKY.

Over residues 1–15 the composition is skewed to basic residues; that stretch reads MQSGHYNRRQSRRQR. Disordered stretches follow at residues 1 to 42 and 58 to 221; these read MQSG…THPP and LNSE…DYFS. The Nuclear localization signal signature appears at 11-31; the sequence is SRRQRISSNTTDSPRHTHGTR. A compositionally biased stretch (polar residues) spans 32–42; that stretch reads YRSTNWYTHPP. Positions 62–72 are enriched in acidic residues; that stretch reads MDQDSSSDASD. The span at 82–93 shows a compositional bias: polar residues; it reads STYNGSEQNTST. Positions 94–109 are enriched in basic and acidic residues; it reads SRHENRIFKLTEREAN. Tandem repeats lie at residues 117–132, 133–148, 149–164, 165–190, and 191–206. The interval 117–218 is 6 X 16 AA approximate tandem repeats; that stretch reads DAIDDEGEAE…IDDEGEAEED (102 aa). Positions 118–219 are enriched in acidic residues; it reads AIDDEGEAEE…DDEGEAEEDY (102 aa). The 1-6; truncated repeat unit spans residues 207–218; that stretch reads DAIDDEGEAEED. A Nuclear export signal motif is present at residues 785–807; it reads QPIPSVDLAENLMQYRNEILGLD.

The protein belongs to the alphaherpesvirinae HHV-1 UL47 family. As to quaternary structure, interacts with US3 kinase. Interacts with ORF24 and ORF27; these interactions seem important for efficient virion nuclear egress. Interacts with ORF17/VHS. Interacts with ORF9. In terms of processing, phosphorylated by US3. This phosphorylation is required for proper nuclear localization.

Its subcellular location is the virion tegument. It is found in the host nucleus. The protein resides in the host cytoplasm. Tegument protein that can bind to various RNA transcripts. Plays a role in the attenuation of selective viral and cellular mRNA degradation by modulating the activity of host shutoff RNase ORF17/VHS. Also plays a role in the primary envelopment of virions in the perinuclear space, probably by interacting with two nuclear egress proteins ORF24 and ORF27. This Varicella-zoster virus (strain Dumas) (HHV-3) protein is Tegument protein UL47 homolog.